A 1509-amino-acid chain; its full sequence is Myosin-2 heavy chain, non muscle (1509 aa).

The region spanning 32–85 is the Myosin N-terminal SH3-like domain; sequence SDKTLAWWPTKDADRAFCHVEVTKDDGKNFTVRLENGEEKSQPKNEKNFLGVNP. The Myosin motor domain occupies 89-787; it reads DGVEDMGELG…QLAAIEELRE (699 aa). The residue at position 133 (Lys133) is an N6,N6,N6-trimethyllysine. 182-189 serves as a coordination point for ATP; it reads GESGAGKT. Positions 623 to 643 are disordered; it reads APAEEEKAAAGGSRNRSTGRG. Actin-binding stretches follow at residues 660–682 and 766–780; these read LAHLMSMLSSTAPHFIRCIIPNL and RFGVTKIFFRSGQLA. Positions 790-819 constitute an IQ domain; the sequence is ISKMVVSIQAGARAFLARRMYDKMREQTVS. Residues 848-1226 are alpha-helical tailpiece (S2); the sequence is LISQRNFQKE…AERDSGAQQR (379 aa). The stretch at 848-1509 forms a coiled coil; it reads LISQRNFQKE…VRAGSARAEE (662 aa). 5 stretches are compositionally biased toward basic and acidic residues: residues 958–1019, 1034–1047, 1097–1107, 1115–1141, and 1179–1189; these read ELKA…KDAL, KNTERGADDVRNEL, EDARSEVDSLK, KSLKTAKDQNRDLDEQLEDERTVRANV, and QVDETKRRLEE. Disordered stretches follow at residues 958–1049, 1068–1141, 1170–1195, 1213–1259, 1352–1425, and 1474–1509; these read ELKA…ELDD, LAQT…RANV, AAQAKTLKTQVDETKRRLEEAEASAA, ADLD…RLEG, VAKE…NREL, and QLQDEIDGTPSSRGGSTRGASARGASVRAGSARAEE. The hinge stretch occupies residues 1227-1252; that stretch reads RKLNTRISELQSELENAPKTGGASSE. Polar residues predominate over residues 1231-1240; it reads TRISELQSEL. The alpha-helical tailpiece (LMM) stretch occupies residues 1253–1482; that stretch reads EVKRLEGELE…AQLQDEIDGT (230 aa). The light meromyosin (LMM) stretch occupies residues 1253–1509; sequence EVKRLEGELE…VRAGSARAEE (257 aa). Residues 1483 to 1509 form a nonhelical tailpiece region; that stretch reads PSSRGGSTRGASARGASVRAGSARAEE. Positions 1484–1509 are enriched in low complexity; sequence SSRGGSTRGASARGASVRAGSARAEE. Phosphoserine occurs at positions 1489, 1494, and 1499.

The protein belongs to the TRAFAC class myosin-kinesin ATPase superfamily. Myosin family. In terms of assembly, myosin II heavy chain is two-headed. It self-assembles into filaments. Hexamer of 2 heavy chain subunits (MHC), 2 alkali light chain subunits (MLC) and 2 regulatory light chain subunits (MLC-2).

Its function is as follows. Myosin is a protein that binds to F-actin and has ATPase activity that is activated by F-actin. This is Myosin-2 heavy chain, non muscle from Acanthamoeba castellanii (Amoeba).